Reading from the N-terminus, the 23-residue chain is Toxin Acra2 (23 aa).

The 22-residue stretch at 2–23 folds into the LCN-type CS-alpha/beta domain; the sequence is KDGYIVDSNGCAPECFPTNXGC.

In terms of processing, contains 4 disulfide bonds. Expressed by the venom gland.

It localises to the secreted. Excitatory insect toxins induce a spastic paralysis. They bind voltage-independently at site-4 of sodium channels (Nav) and shift the voltage of activation toward more negative potentials thereby affecting sodium channel activation and promoting spontaneous and repetitive firing. Is lethal to mice. Is about 1% of the total protein in the venom. This chain is Toxin Acra2, found in Androctonus crassicauda (Arabian fat-tailed scorpion).